The sequence spans 357 residues: (4E)-oxalomesaconate Delta-isomerase (357 aa).

Belongs to the PrpF family.

It carries out the reaction (1E)-4-oxobut-1-ene-1,2,4-tricarboxylate = (3Z)-2-oxo-4-carboxy-3-hexenedioate. It participates in secondary metabolite metabolism; lignin degradation. Contributes to the degradation of lignin at the level of the protocatechuate 4,5-cleavage pathway. Catalyzes the isomerization of the double bond between C4 and C5 in (4E)-oxalomesaconate (OMA) to (3Z)-2-keto-4-carboxy-3-hexenedioate (KCH), where the double bond has migrated between C3 and C4 via a 1,3-allylic isomerization. In Novosphingobium sp. (strain KA1) (Sphingomonas sp. (strain KA1)), this protein is (4E)-oxalomesaconate Delta-isomerase.